Here is a 316-residue protein sequence, read N- to C-terminus: Pantothenate kinase (316 aa).

Residue 95–102 (GSVSVGKS) coordinates ATP.

This sequence belongs to the prokaryotic pantothenate kinase family.

The protein localises to the cytoplasm. It carries out the reaction (R)-pantothenate + ATP = (R)-4'-phosphopantothenate + ADP + H(+). It participates in cofactor biosynthesis; coenzyme A biosynthesis; CoA from (R)-pantothenate: step 1/5. The polypeptide is Pantothenate kinase (Actinobacillus pleuropneumoniae serotype 7 (strain AP76)).